The chain runs to 157 residues: Ribosome maturation factor RimP (157 aa).

This sequence belongs to the RimP family.

It is found in the cytoplasm. In terms of biological role, required for maturation of 30S ribosomal subunits. This chain is Ribosome maturation factor RimP, found in Limosilactobacillus reuteri (strain DSM 20016) (Lactobacillus reuteri).